A 256-amino-acid chain; its full sequence is MMKINLNADLGESFGAWKMGEDDALLQVVRSANIACGFHAGDPLVMRNTVRMALAAGVSLGAHPAYPDLQGFGRRPMKMAPAELEAAVIYQLGALAGIAAAEGGRLSHVKPHGALSNQACEDAELAATVVRAVRAFDRELILLAPALSELHAVGERAGLRVAAEIFADRAYTDAATLAARTQPGAVIHDHDEIIAHVLRMLDAGGIVAQSGKVMKTVMHSVCVHGDTPGAVQSARRLAETLAAKGWELVGLPEMGE.

The protein belongs to the LamB/PxpA family. Forms a complex composed of PxpA, PxpB and PxpC.

The enzyme catalyses 5-oxo-L-proline + ATP + 2 H2O = L-glutamate + ADP + phosphate + H(+). Functionally, catalyzes the cleavage of 5-oxoproline to form L-glutamate coupled to the hydrolysis of ATP to ADP and inorganic phosphate. The protein is 5-oxoprolinase subunit A of Azoarcus sp. (strain BH72).